The sequence spans 733 residues: Neutral ceramidase 3 (733 aa).

Positions 1 to 25 (MTRWSMSMHCTLFLLFLLRLTCIFS) are cleaved as a signal peptide. Residue Ser-307 is the Nucleophile of the active site. Asn-325 carries N-linked (GlcNAc...) asparagine glycosylation.

It belongs to the neutral ceramidase family.

It localises to the secreted. The protein localises to the endoplasmic reticulum. Its subcellular location is the golgi apparatus. The catalysed reaction is an N-acylsphing-4-enine + H2O = sphing-4-enine + a fatty acid. Functionally, hydrolyzes the sphingolipid ceramide into sphingosine and free fatty acid. Promotes oxidative stress resistance. This Arabidopsis thaliana (Mouse-ear cress) protein is Neutral ceramidase 3.